Here is a 376-residue protein sequence, read N- to C-terminus: Histidinol-phosphate aminotransferase 1 (376 aa).

Lysine 235 is subject to N6-(pyridoxal phosphate)lysine.

Belongs to the class-II pyridoxal-phosphate-dependent aminotransferase family. Histidinol-phosphate aminotransferase subfamily. In terms of assembly, homodimer. It depends on pyridoxal 5'-phosphate as a cofactor.

The catalysed reaction is L-histidinol phosphate + 2-oxoglutarate = 3-(imidazol-4-yl)-2-oxopropyl phosphate + L-glutamate. It functions in the pathway amino-acid biosynthesis; L-histidine biosynthesis; L-histidine from 5-phospho-alpha-D-ribose 1-diphosphate: step 7/9. This chain is Histidinol-phosphate aminotransferase 1, found in Cupriavidus pinatubonensis (strain JMP 134 / LMG 1197) (Cupriavidus necator (strain JMP 134)).